The chain runs to 236 residues: 15,16-dihydrobiliverdin:ferredoxin oxidoreductase (236 aa).

This sequence belongs to the HY2 family.

The catalysed reaction is 15,16-dihydrobiliverdin + oxidized 2[4Fe-4S]-[ferredoxin] = biliverdin IXalpha + reduced 2[4Fe-4S]-[ferredoxin] + 2 H(+). Catalyzes the two-electron reduction of biliverdin IX-alpha at the C15 methine bridge. The protein is 15,16-dihydrobiliverdin:ferredoxin oxidoreductase of Prochlorococcus marinus (strain MIT 9312).